The primary structure comprises 62 residues: Conotoxin Sr5.7 (62 aa).

Positions 1–22 are cleaved as a signal peptide; sequence MRCLPVFVILLLLIASAPSVDA. Positions 23–44 are excised as a propeptide; it reads QLKTKDDVPLASFHDNAKGTQH.

The protein belongs to the conotoxin T superfamily. Contains 2 disulfide bonds that can be either 'C1-C3, C2-C4' or 'C1-C4, C2-C3', since these disulfide connectivities have been observed for conotoxins with cysteine framework V (for examples, see AC P0DQQ7 and AC P81755). As to expression, expressed by the venom duct.

The protein localises to the secreted. In Conus spurius (Alphabet cone), this protein is Conotoxin Sr5.7.